The following is a 252-amino-acid chain: Chitooligosaccharide deacetylase (252 aa).

Residues His61 and His125 each coordinate Mg(2+).

The protein belongs to the YdjC deacetylase family. ChbG subfamily. In terms of assembly, homodimer. Mg(2+) serves as cofactor.

It localises to the cytoplasm. The enzyme catalyses N,N'-diacetylchitobiose + H2O = N-acetyl-beta-D-glucosaminyl-(1-&gt;4)-D-glucosamine + acetate. It carries out the reaction diacetylchitobiose-6'-phosphate + H2O = N'-monoacetylchitobiose-6'-phosphate + acetate. It functions in the pathway glycan degradation; chitin degradation. Involved in the degradation of chitin. ChbG is essential for growth on the acetylated chitooligosaccharides chitobiose and chitotriose but is dispensable for growth on cellobiose and chitosan dimer, the deacetylated form of chitobiose. Deacetylation of chitobiose-6-P and chitotriose-6-P is necessary for both the activation of the chb promoter by the regulatory protein ChbR and the hydrolysis of phosphorylated beta-glucosides by the phospho-beta-glucosidase ChbF. Catalyzes the removal of only one acetyl group from chitobiose-6-P to yield monoacetylchitobiose-6-P, the inducer of ChbR and the substrate of ChbF. The polypeptide is Chitooligosaccharide deacetylase (Salmonella paratyphi B (strain ATCC BAA-1250 / SPB7)).